The sequence spans 341 residues: Phosphoribosylformylglycinamidine cyclo-ligase (341 aa).

The protein belongs to the AIR synthase family.

It is found in the cytoplasm. The catalysed reaction is 2-formamido-N(1)-(5-O-phospho-beta-D-ribosyl)acetamidine + ATP = 5-amino-1-(5-phospho-beta-D-ribosyl)imidazole + ADP + phosphate + H(+). It participates in purine metabolism; IMP biosynthesis via de novo pathway; 5-amino-1-(5-phospho-D-ribosyl)imidazole from N(2)-formyl-N(1)-(5-phospho-D-ribosyl)glycinamide: step 2/2. The sequence is that of Phosphoribosylformylglycinamidine cyclo-ligase from Finegoldia magna (strain ATCC 29328 / DSM 20472 / WAL 2508) (Peptostreptococcus magnus).